We begin with the raw amino-acid sequence, 486 residues long: CDT1-like protein b (486 aa).

Disordered stretches follow at residues P273–S294 and V348–D371. The segment covering L281 to S294 has biased composition (polar residues). Residues V348 to Y363 are compositionally biased toward basic and acidic residues.

Belongs to the Cdt1 family. In terms of tissue distribution, expressed in proliferating (e.g. shoot and root apical meristems, organ primordia, guard cells and stomatal lineage) and endoreplicating cells (e.g. developing trichomes).

It localises to the nucleus. In terms of biological role, member of the pre-replication complex. Regulates endoreduplication. Involved in the coordination of cell and plastid division. The polypeptide is CDT1-like protein b (CDT1B) (Arabidopsis thaliana (Mouse-ear cress)).